The primary structure comprises 114 residues: Ribonuclease P protein component (114 aa).

This sequence belongs to the RnpA family. As to quaternary structure, consists of a catalytic RNA component (M1 or rnpB) and a protein subunit.

The catalysed reaction is Endonucleolytic cleavage of RNA, removing 5'-extranucleotides from tRNA precursor.. In terms of biological role, RNaseP catalyzes the removal of the 5'-leader sequence from pre-tRNA to produce the mature 5'-terminus. It can also cleave other RNA substrates such as 4.5S RNA. The protein component plays an auxiliary but essential role in vivo by binding to the 5'-leader sequence and broadening the substrate specificity of the ribozyme. The polypeptide is Ribonuclease P protein component (Buchnera aphidicola subsp. Baizongia pistaciae (strain Bp)).